Reading from the N-terminus, the 339-residue chain is UDP-glucose 4-epimerase (339 aa).

NAD(+) contacts are provided by residues G10 to I12, D31 to N35, D58 to L59, F80, and K84. S124–T126 provides a ligand contact to substrate. Residue Y148 is the Proton acceptor of the active site. NAD(+) is bound by residues K152 and Y176. Substrate-binding positions include Y176–N178, N197–L199, R230, and R291–D294.

This sequence belongs to the NAD(P)-dependent epimerase/dehydratase family. The cofactor is NAD(+).

It catalyses the reaction UDP-alpha-D-glucose = UDP-alpha-D-galactose. The catalysed reaction is UDP-N-acetyl-alpha-D-glucosamine = UDP-N-acetyl-alpha-D-galactosamine. Its pathway is cell wall biogenesis; teichoic acid biosynthesis. Catalyzes two distinct but analogous reactions: the reversible epimerization of UDP-glucose to UDP-galactose and the reversible epimerization of UDP-N-acetylglucosamine to UDP-N-acetylgalactosamine. The enzyme is more efficient in catalyzing the interconversion between unacetylated than between corresponding N-acetylated substrates. Essential for growth in media containing either glucose or galactose. May protect the cell from the toxic effects of galactose and glucose or derivatives of both sugars. Involved in the biosynthesis of teichoic acids via the formation of UDP-N-acetylgalactosamine. Influences cell division. The protein is UDP-glucose 4-epimerase of Bacillus subtilis (strain 168).